We begin with the raw amino-acid sequence, 320 residues long: MQMKMMFFCLSDWQSNQQMHGKMAPLKSHVPCTEKPGKVQEPPDDGSLHWSEGSKGEDIKKYSREGTLRSKYNQQYHKLFKDIPLEEVVLKVCSCALQRDLLLHGRLYISPNWLCFHASLFGKDIKVVIPVVSVQLIKKHKMARLLPNGLAITTNTSQKYVFVSLLSRDSVYDMLRRVCTHLQPSSKKSLSIRKFPEEAECESPEVLIPEMKWRKACSAPASLSLPDSISCISQIPTDSTDSCFPSRKPPGSEAVCEKDALEEEPSTDQELRLWDSRLLKVIFVMICFLVLSSSYLAFRISRLEQQLCSLSWGSPLPRDR.

Positions 33 to 56 are disordered; sequence TEKPGKVQEPPDDGSLHWSEGSKG. A GRAM domain is found at 74-141; sequence QQYHKLFKDI…VSVQLIKKHK (68 aa). Residues 278-298 form a helical membrane-spanning segment; sequence LLKVIFVMICFLVLSSSYLAF.

In terms of processing, phosphorylated.

The protein resides in the endoplasmic reticulum membrane. The protein localises to the cell membrane. Participates in the organization ofendoplasmic reticulum-plasma membrane contact sites (EPCS) with pleiotropic functions including STIM1 recruitment and calcium homeostasis. Constitutive tether that co-localize with ESYT2/3 tethers at endoplasmic reticulum-plasma membrane contact sites in a phosphatidylinositol lipid-dependent manner. Pre-marks the subset of phosphtidylinositol 4,5-biphosphate (PI(4,5)P2)-enriched EPCS destined for the store operated calcium entry pathway (SOCE). The polypeptide is GRAM domain-containing protein 2A (Mus musculus (Mouse)).